The following is a 455-amino-acid chain: Bifunctional protein GlmU (455 aa).

Residues 1-226 are pyrophosphorylase; it reads MSLDIVILAA…AMEVQGANDR (226 aa). UDP-N-acetyl-alpha-D-glucosamine-binding positions include 8-11, lysine 22, glutamine 73, 78-79, 99-101, glycine 136, glutamate 151, asparagine 166, and asparagine 224; these read LAAG, GT, and YGD. A Mg(2+)-binding site is contributed by aspartate 101. Asparagine 224 is a binding site for Mg(2+). Residues 227-247 are linker; that stretch reads KQLSELERHYQMREARRLMAA. The N-acetyltransferase stretch occupies residues 248 to 455; the sequence is GVTLRDPARF…WKRPVKISKD (208 aa). Residues arginine 330 and lysine 348 each coordinate UDP-N-acetyl-alpha-D-glucosamine. The active-site Proton acceptor is the histidine 360. The UDP-N-acetyl-alpha-D-glucosamine site is built by tyrosine 363 and asparagine 374. Residues alanine 377, 383–384, serine 402, alanine 420, and arginine 437 each bind acetyl-CoA; that span reads NY.

In the N-terminal section; belongs to the N-acetylglucosamine-1-phosphate uridyltransferase family. This sequence in the C-terminal section; belongs to the transferase hexapeptide repeat family. As to quaternary structure, homotrimer. It depends on Mg(2+) as a cofactor.

Its subcellular location is the cytoplasm. The catalysed reaction is alpha-D-glucosamine 1-phosphate + acetyl-CoA = N-acetyl-alpha-D-glucosamine 1-phosphate + CoA + H(+). The enzyme catalyses N-acetyl-alpha-D-glucosamine 1-phosphate + UTP + H(+) = UDP-N-acetyl-alpha-D-glucosamine + diphosphate. The protein operates within nucleotide-sugar biosynthesis; UDP-N-acetyl-alpha-D-glucosamine biosynthesis; N-acetyl-alpha-D-glucosamine 1-phosphate from alpha-D-glucosamine 6-phosphate (route II): step 2/2. It functions in the pathway nucleotide-sugar biosynthesis; UDP-N-acetyl-alpha-D-glucosamine biosynthesis; UDP-N-acetyl-alpha-D-glucosamine from N-acetyl-alpha-D-glucosamine 1-phosphate: step 1/1. It participates in bacterial outer membrane biogenesis; LPS lipid A biosynthesis. Functionally, catalyzes the last two sequential reactions in the de novo biosynthetic pathway for UDP-N-acetylglucosamine (UDP-GlcNAc). The C-terminal domain catalyzes the transfer of acetyl group from acetyl coenzyme A to glucosamine-1-phosphate (GlcN-1-P) to produce N-acetylglucosamine-1-phosphate (GlcNAc-1-P), which is converted into UDP-GlcNAc by the transfer of uridine 5-monophosphate (from uridine 5-triphosphate), a reaction catalyzed by the N-terminal domain. This Pseudomonas syringae pv. syringae (strain B728a) protein is Bifunctional protein GlmU.